The sequence spans 653 residues: Probable syringafactin export ATP-binding/permease protein SyfD (653 aa).

The ABC transporter domain maps to 6–244; it reads LELNGVTRRF…NEKTTERLPT (239 aa). ATP is bound at residue 42 to 49; that stretch reads GASGSGKS. The next 5 helical transmembrane spans lie at 252–272, 278–298, 526–546, 583–603, and 616–636; these read LMAN…ALIS, LLTM…VAIG, LALL…IGVM, MVCL…GYVF, and LGSI…FGFV.

It belongs to the ABC transporter superfamily. Macrolide exporter (TC 3.A.1.122) family. Probably part of a tripartite efflux system, which is composed of an inner membrane transporter, a periplasmic membrane fusion protein, and an outer membrane component.

The protein resides in the cell inner membrane. Functionally, probably involved in the export of syringafactins. The polypeptide is Probable syringafactin export ATP-binding/permease protein SyfD (Pseudomonas syringae pv. syringae (strain B728a)).